Here is a 145-residue protein sequence, read N- to C-terminus: MVDLARRCSGSTEGRFLMWECTKWCGPGNNAKCESDLGPLEADKCCRTHDHCDYIASGETKYGITNYAFFTKLNCKCEEAFDRCLTEAYNKEEKESAKSSTKRLQNFYFGTYSPECYVVTCNSKRSGRDAGCENGVATWKKSYKD.

The N-terminal stretch at 1-15 (MVDLARRCSGSTEGR) is a signal peptide. 3 residues coordinate Ca(2+): Trp-24, Gly-26, and Gly-28. 5 cysteine pairs are disulfide-bonded: Cys-25/Cys-46, Cys-45/Cys-84, Cys-52/Cys-77, Cys-75/Cys-116, and Cys-121/Cys-132. The active site involves His-49. Asp-50 is a Ca(2+) binding site. A propeptide spanning residues 124–128 (KRSGR) is cleaved from the precursor.

Belongs to the phospholipase A2 family. Group III subfamily. Heterodimer composed of a small subunit and a large subunit; disulfid-linked. Ca(2+) is required as a cofactor. Expressed by the venom gland.

It is found in the secreted. It carries out the reaction a 1,2-diacyl-sn-glycero-3-phosphocholine + H2O = a 1-acyl-sn-glycero-3-phosphocholine + a fatty acid + H(+). Scorpion venom phospholipase A2 (PLA2) that contains enzymatic activity, but does not inhibit ryanodine receptors in contrary to imperatoxin-1, another heterodimer of P.imperator venom. PLA2 catalyzes the calcium-dependent hydrolysis of the 2-acyl groups in 3-sn-phosphoglycerides. The protein is Phospholipase A2 phospholipin of Pandinus imperator (Emperor scorpion).